We begin with the raw amino-acid sequence, 511 residues long: Cobyric acid synthase (511 aa).

The 193-residue stretch at 251 to 443 (LLDIAIICLP…IHGIFDNDVF (193 aa)) folds into the GATase cobBQ-type domain. Cys332 (nucleophile) is an active-site residue. His435 is a catalytic residue.

Belongs to the CobB/CobQ family. CobQ subfamily.

The protein operates within cofactor biosynthesis; adenosylcobalamin biosynthesis. In terms of biological role, catalyzes amidations at positions B, D, E, and G on adenosylcobyrinic A,C-diamide. NH(2) groups are provided by glutamine, and one molecule of ATP is hydrogenolyzed for each amidation. The polypeptide is Cobyric acid synthase (Listeria monocytogenes serotype 4b (strain CLIP80459)).